The primary structure comprises 562 residues: Formate--tetrahydrofolate ligase (562 aa).

71–78 (TPAGEGKS) provides a ligand contact to ATP.

It belongs to the formate--tetrahydrofolate ligase family.

It carries out the reaction (6S)-5,6,7,8-tetrahydrofolate + formate + ATP = (6R)-10-formyltetrahydrofolate + ADP + phosphate. It participates in one-carbon metabolism; tetrahydrofolate interconversion. This is Formate--tetrahydrofolate ligase from Bacillus anthracis (strain A0248).